Consider the following 419-residue polypeptide: Acyl-[acyl-carrier-protein] desaturase 6, chloroplastic (419 aa).

The N-terminal 54 residues, 1 to 54 (MAATATMAMPLANRLRCKPNTNSSSPSRTLFGRRVTMISSSRWGSAVSGSAIMS), are a transit peptide targeting the chloroplast. Fe cation is bound by residues Glu151, Glu189, His192, Glu242, Glu277, and His280.

The protein belongs to the fatty acid desaturase type 2 family. Homodimer. Requires Fe(2+) as cofactor.

It localises to the plastid. It is found in the chloroplast. It participates in lipid metabolism; fatty acid metabolism. In terms of biological role, introduces a cis double bond in the acyl chain of an acyl-[acyl-carrier protein]. The protein is Acyl-[acyl-carrier-protein] desaturase 6, chloroplastic of Oryza sativa subsp. japonica (Rice).